The following is a 598-amino-acid chain: Chromodomain Y-like protein (598 aa).

A disordered region spans residues M1–K76. Over residues P44–Q56 the composition is skewed to polar residues. Residues L61–T121 form the Chromo domain. The interval L61–T309 is interaction with EZH2. Residues R65 to K76 are compositionally biased toward basic and acidic residues. The residue at position 88 (S88) is a Phosphoserine. Positions R112–T121 are enriched in basic and acidic residues. The segment at R112 to S149 is disordered. Residues L122–S149 are compositionally biased toward polar residues. At K135 the chain carries N6,N6,N6-trimethyllysine; by EHMT2; alternate. An N6,N6-dimethyllysine; by EHMT2; alternate modification is found at K135. Residue K135 is modified to N6-methyllysine; by EHMT2; alternate. 3 positions are modified to phosphoserine: S170, S201, and S216. The segment at K204–G226 is disordered. The segment at S362–K594 is acetyl-CoA-binding domain.

As to quaternary structure, forms multimers and multimerization is required for stable binding to chromatin. Interacts with HDAC1 and HDAC2 via its C-terminal acetyl-CoA-binding domain. Interacts with EZH2, EED, SUZ12, REST, EHMT1 and EHMT2. Part of a complex containing at least CDYL, REST, WIZ, SETB1, EHMT1 and EHMT2. Part of a complex containing at least CDYL, MIER1, MIER2, HDAC1 and HDAC2. Interacts with CHAF1A and CHAF1B; bridging the CAF-1 complex to the MCM2-7 (MCM) complex. Interacts with MCM3 and MCM5; bridging the CAF-1 complex to the MCM2-7 (MCM) complex. Recruited to Xist RNA-coated X chromosome. Interacts with EHMT2 and PRDM9; interaction only takes place when PRDM9 is bound to hotspot DNA. In terms of tissue distribution, expressed in the hippocampus with reduced expression in epileptic tissue compared to normal adjacent tissue (at protein level). Ubiquitous. Expressed at moderate levels in all tissues examined. Isoform 2: Most abundantly expressed isoform.

The protein localises to the nucleus. It is found in the chromosome. The catalysed reaction is 3-hydroxybutanoyl-CoA = (2E)-butenoyl-CoA + H2O. Chromatin reader protein that recognizes and binds histone H3 trimethylated at 'Lys-9', dimethylated at 'Lys-27' and trimethylated at 'Lys-27' (H3K9me3, H3K27me2 and H3K27me3, respectively). Part of multimeric repressive chromatin complexes, where it is required for transmission and restoration of repressive histone marks, thereby preserving the epigenetic landscape. Required for chromatin targeting and maximal enzymatic activity of Polycomb repressive complex 2 (PRC2); acts as a positive regulator of PRC2 activity by bridging the pre-existing histone H3K27me3 and newly recruited PRC2 on neighboring nucleosomes. Acts as a corepressor for REST by facilitating histone-lysine N-methyltransferase EHMT2 recruitment and H3K9 dimethylation at REST target genes for repression. Involved in X chromosome inactivation in females: recruited to Xist RNA-coated X chromosome and facilitates propagation of H3K9me2 by anchoring EHMT2. Promotes EZH2 accumulation and H3K27me3 methylation at DNA double strand breaks (DSBs), thereby facilitating transcriptional repression at sites of DNA damage and homology-directed repair of DSBs. Required for neuronal migration during brain development by repressing expression of RHOA. By repressing the expression of SCN8A, contributes to the inhibition of intrinsic neuronal excitability and epileptogenesis. In addition to acting as a chromatin reader, acts as a hydro-lyase. Shows crotonyl-coA hydratase activity by mediating the conversion of crotonyl-CoA ((2E)-butenoyl-CoA) to beta-hydroxybutyryl-CoA (3-hydroxybutanoyl-CoA), thereby acting as a negative regulator of histone crotonylation. Histone crotonylation is required during spermatogenesis; down-regulation of histone crotonylation by CDYL regulates the reactivation of sex chromosome-linked genes in round spermatids and histone replacement in elongating spermatids. By regulating histone crotonylation and trimethylation of H3K27, may be involved in stress-induced depression-like behaviors, possibly by regulating VGF expression. In terms of biological role, not able to recognize and bind histone H3K9me3, histone H3K27me2 and histone H3K27me3, due to the presence of a N-terminal extension that inactivates the chromo domain. Its function is as follows. Not able to recognize and bind histone H3K9me3, histone H3K27me2 and histone H3K27me3, due to the absence of the chromo domain. Acts as a negative regulator of isoform 2 by displacing isoform 2 from chromatin. The sequence is that of Chromodomain Y-like protein from Homo sapiens (Human).